A 397-amino-acid chain; its full sequence is Acetate kinase (397 aa).

N8 contacts Mg(2+). Residue K15 participates in ATP binding. R92 is a binding site for substrate. Residue D149 is the Proton donor/acceptor of the active site. ATP contacts are provided by residues 209 to 213, 283 to 285, and 331 to 335; these read HLGNG, DFR, and GVGEN. E385 lines the Mg(2+) pocket.

This sequence belongs to the acetokinase family. Homodimer. It depends on Mg(2+) as a cofactor. The cofactor is Mn(2+).

The protein localises to the cytoplasm. The catalysed reaction is acetate + ATP = acetyl phosphate + ADP. It functions in the pathway metabolic intermediate biosynthesis; acetyl-CoA biosynthesis; acetyl-CoA from acetate: step 1/2. In terms of biological role, catalyzes the formation of acetyl phosphate from acetate and ATP. Can also catalyze the reverse reaction. The chain is Acetate kinase from Corynebacterium glutamicum (strain R).